Reading from the N-terminus, the 39-residue chain is Omega-theraphotoxin-Bs1b (39 aa).

Disulfide bonds link Cys-4/Cys-25, Cys-8/Cys-31, and Cys-17/Cys-36.

This sequence belongs to the neurotoxin 12 (Hwtx-2) family. 06 (TXP1) subfamily. Expressed by the venom gland.

It localises to the secreted. Inhibits voltage-gated calcium channels (Cav) in rat cerebellar granule cells. Has insecticidal activity. The polypeptide is Omega-theraphotoxin-Bs1b (Brachypelma smithi (Mexican red knee tarantula)).